The sequence spans 146 residues: 3-dehydroquinate dehydratase (146 aa).

Tyr-24 (proton acceptor) is an active-site residue. Residues Asn-73, His-79, and Asp-86 each contribute to the substrate site. The active-site Proton donor is His-99. Substrate-binding positions include 100-101 and Arg-110; that span reads LS.

Belongs to the type-II 3-dehydroquinase family. In terms of assembly, homododecamer.

It carries out the reaction 3-dehydroquinate = 3-dehydroshikimate + H2O. It functions in the pathway metabolic intermediate biosynthesis; chorismate biosynthesis; chorismate from D-erythrose 4-phosphate and phosphoenolpyruvate: step 3/7. Catalyzes a trans-dehydration via an enolate intermediate. The chain is 3-dehydroquinate dehydratase from Shewanella baltica (strain OS223).